The following is a 158-amino-acid chain: SsrA-binding protein (158 aa).

Belongs to the SmpB family.

The protein localises to the cytoplasm. Required for rescue of stalled ribosomes mediated by trans-translation. Binds to transfer-messenger RNA (tmRNA), required for stable association of tmRNA with ribosomes. tmRNA and SmpB together mimic tRNA shape, replacing the anticodon stem-loop with SmpB. tmRNA is encoded by the ssrA gene; the 2 termini fold to resemble tRNA(Ala) and it encodes a 'tag peptide', a short internal open reading frame. During trans-translation Ala-aminoacylated tmRNA acts like a tRNA, entering the A-site of stalled ribosomes, displacing the stalled mRNA. The ribosome then switches to translate the ORF on the tmRNA; the nascent peptide is terminated with the 'tag peptide' encoded by the tmRNA and targeted for degradation. The ribosome is freed to recommence translation, which seems to be the essential function of trans-translation. The protein is SsrA-binding protein of Bartonella henselae (strain ATCC 49882 / DSM 28221 / CCUG 30454 / Houston 1) (Rochalimaea henselae).